A 201-amino-acid chain; its full sequence is MNAVPHLGVLALQGAFREHRQRLEALGVRVTEVRRPGDLAGLQGLILPGGESTTIARLMTDFGLWQPVRDFHAAGGALWGTCAGAILLAREVLGGPPQFGGHQASLALMDLSVRRNAFGRQVDSFRVPLAVRGLAAPFPAVFIRAPVIERVGEGVDVLARHQGQIVLARQGRLLASAFHPELTPDPRLHALFLEMSLTVSA.

50–52 (GES) contacts L-glutamine. Cys82 functions as the Nucleophile in the catalytic mechanism. Residues Arg115 and 143–144 (IR) contribute to the L-glutamine site. Active-site charge relay system residues include His179 and Glu181.

This sequence belongs to the glutaminase PdxT/SNO family. In the presence of PdxS, forms a dodecamer of heterodimers. Only shows activity in the heterodimer.

It catalyses the reaction aldehydo-D-ribose 5-phosphate + D-glyceraldehyde 3-phosphate + L-glutamine = pyridoxal 5'-phosphate + L-glutamate + phosphate + 3 H2O + H(+). It carries out the reaction L-glutamine + H2O = L-glutamate + NH4(+). Its pathway is cofactor biosynthesis; pyridoxal 5'-phosphate biosynthesis. Functionally, catalyzes the hydrolysis of glutamine to glutamate and ammonia as part of the biosynthesis of pyridoxal 5'-phosphate. The resulting ammonia molecule is channeled to the active site of PdxS. This Deinococcus geothermalis (strain DSM 11300 / CIP 105573 / AG-3a) protein is Pyridoxal 5'-phosphate synthase subunit PdxT.